We begin with the raw amino-acid sequence, 255 residues long: DNA repair protein RecO (255 aa).

The protein belongs to the RecO family.

Its function is as follows. Involved in DNA repair and RecF pathway recombination. This is DNA repair protein RecO from Listeria monocytogenes serotype 4b (strain CLIP80459).